The sequence spans 826 residues: Arsenite oxidase subunit AioA (826 aa).

Cys22, Cys25, and Cys29 together coordinate [3Fe-4S] cluster. Positions 196, 204, 420, and 424 each coordinate substrate.

This sequence belongs to the prokaryotic molybdopterin-containing oxidoreductase family. In terms of assembly, heterodimer consisting of a large and a small subunit. The cofactor is [3Fe-4S] cluster. Requires Mo-bis(molybdopterin guanine dinucleotide) as cofactor.

The enzyme catalyses 2 oxidized [azurin] + arsenite + H2O = 2 reduced [azurin] + arsenate + 3 H(+). Involved in the detoxification of arsenic. Oxidizes As(III)O3(3-) (arsenite) to the somewhat less toxic As(V)O4(3-) (arsenate). This chain is Arsenite oxidase subunit AioA (aioA), found in Alcaligenes faecalis.